The chain runs to 346 residues: Uroporphyrinogen decarboxylase (346 aa).

Residues 26–30 (RQAGR), Asp76, Tyr153, Ser208, and His323 contribute to the substrate site.

The protein belongs to the uroporphyrinogen decarboxylase family. As to quaternary structure, homodimer.

The protein resides in the cytoplasm. It catalyses the reaction uroporphyrinogen III + 4 H(+) = coproporphyrinogen III + 4 CO2. The protein operates within porphyrin-containing compound metabolism; protoporphyrin-IX biosynthesis; coproporphyrinogen-III from 5-aminolevulinate: step 4/4. Functionally, catalyzes the decarboxylation of four acetate groups of uroporphyrinogen-III to yield coproporphyrinogen-III. This chain is Uroporphyrinogen decarboxylase, found in Prochlorococcus marinus (strain MIT 9515).